A 269-amino-acid polypeptide reads, in one-letter code: Zinc finger protein SNAI2 (269 aa).

An SNAG domain region spans residues 1-20; it reads MPRSFLVKKHFNASKKPNYS. Residues 81–117 are disordered; sequence SSSLGRVSPPPSSDTSSKDHSGSESPISDEEERLQPK. 4 C2H2-type zinc fingers span residues 129–151, 160–182, 186–208, and 214–236; these read FQCNLCNKTYSTFSGLAKHKQLH, FSCKYCDKEYVSLGALKMHIRTH, CVCKICGKAFSRPWLLQGHIRTH, and FSCPHCNRAFADRSNLRAHLQTH. The C2H2-type 5; atypical zinc-finger motif lies at 242 to 265; it reads YQCKNCSKTFSRMSLLHKHEESGC.

The protein belongs to the snail C2H2-type zinc-finger protein family. In terms of assembly, interacts (via SNAG domain) with LIMD1 (via LIM domains), WTIP (via LIM domains) and AJUBA (via LIM domains). Interacts (via zinc fingers) with KPNA2, KPNB1, and TNPO1. May interact (via zinc fingers) with IPO7. In terms of processing, phosphorylated by GSK3B. Once phosphorylated, it becomes a target for ubiquitination. Post-translationally, ubiquitinated by the SCF(FBXO11) complex; ubiquitination requires previous GSK3B-mediated SNAI2 phosphorylation.

Its subcellular location is the nucleus. It localises to the cytoplasm. Functionally, transcriptional repressor that modulates both activator-dependent and basal transcription. Involved in the generation and migration of neural crest cells. Plays a role in mediating RAF1-induced transcriptional repression of the TJ protein, occludin (OCLN) and subsequent oncogenic transformation of epithelial cells. Represses BRCA2 expression by binding to its E2-box-containing silencer and recruiting CTBP1 and HDAC1 in breast cells. In epidermal keratinocytes, binds to the E-box in ITGA3 promoter and represses its transcription. Involved in the regulation of ITGB1 and ITGB4 expression and cell adhesion and proliferation in epidermal keratinocytes. Binds to E-box2 domain of BSG and activates its expression during TGFB1-induced epithelial-mesenchymal transition (EMT) in hepatocytes. Represses E-Cadherin/CDH1 transcription via E-box elements. Involved in osteoblast maturation. Binds to RUNX2 and SOC9 promoters and may act as a positive and negative transcription regulator, respectively, in osteoblasts. Binds to CXCL12 promoter via E-box regions in mesenchymal stem cells and osteoblasts. Plays an essential role in TWIST1-induced EMT and its ability to promote invasion and metastasis. This is Zinc finger protein SNAI2 (Snai2) from Mus musculus (Mouse).